Consider the following 229-residue polypeptide: MGDKIWLPFPVLLLAALPPVLLPGAAGFTPSLDSDFTFTLPAGQRECFYQPMPLKASLEIEYQVLDGAGLDIDFHLASPEGKTLVFEQRKSDGVHTVETEVGDYMFCFDNTFSTISEKVIFFELILDNMGEQAQEQEDWKKYITGTDMLDMKLEDILESINSIKSRLSKSGHIQTLLRAFEARDRNIQESNFDRVNFWSMVNLVVMVVVSAIQVYMLKSLFEDKRKSRT.

An N-terminal signal peptide occupies residues 1–27; the sequence is MGDKIWLPFPVLLLAALPPVLLPGAAG. Over 28–196 the chain is Lumenal; that stretch reads FTPSLDSDFT…IQESNFDRVN (169 aa). The GOLD domain occupies 45–126; that stretch reads RECFYQPMPL…EKVIFFELIL (82 aa). Residues 197 to 217 traverse the membrane as a helical segment; it reads FWSMVNLVVMVVVSAIQVYML. Residues 218 to 229 are Cytoplasmic-facing; the sequence is KSLFEDKRKSRT.

It belongs to the EMP24/GP25L family. Interacts with TMED9 and TMED10.

It localises to the endoplasmic reticulum membrane. The protein localises to the golgi apparatus. Its subcellular location is the cis-Golgi network membrane. It is found in the endoplasmic reticulum-Golgi intermediate compartment membrane. Potential role in vesicular protein trafficking, mainly in the early secretory pathway. Required for the maintenance of the Golgi apparatus; involved in protein exchange between Golgi stacks during assembly. Probably not required for COPI-vesicle-mediated retrograde transport. This chain is Transmembrane emp24 domain-containing protein 5 (TMED5), found in Pongo abelii (Sumatran orangutan).